Reading from the N-terminus, the 232-residue chain is Transcriptional regulatory protein CpxR (232 aa).

The 113-residue stretch at 3–115 (KILLVDDDRE…ELVARIRAIL (113 aa)) folds into the Response regulatory domain. A 4-aspartylphosphate modification is found at Asp-51. The segment at residues 131-230 (SPTLEVDALV…LRGRGYLMVS (100 aa)) is a DNA-binding region (ompR/PhoB-type).

Phosphorylated by CpxA.

The protein resides in the cytoplasm. Its function is as follows. Member of the two-component regulatory system CpxA/CpxR. This system combats a variety of extracytoplasmic protein-mediated toxicities. It performs this function by increasing the synthesis of the periplasmic protease, DegP as well as that of CpxP protein. The chain is Transcriptional regulatory protein CpxR (cpxR) from Escherichia coli O157:H7.